A 313-amino-acid chain; its full sequence is ADP-L-glycero-D-manno-heptose-6-epimerase (313 aa).

NADP(+) is bound by residues M10–I11, D31–N32, K38, R53, E75–S79, and N92. Y139 serves as the catalytic Proton acceptor. K143 provides a ligand contact to NADP(+). N174 is a substrate binding site. NADP(+) is bound by residues V175 and K183. Residue K183 is the Proton acceptor of the active site. Substrate-binding positions include S185, H192, F206–S209, R214, and Y277.

It belongs to the NAD(P)-dependent epimerase/dehydratase family. HldD subfamily. Homopentamer. NADP(+) is required as a cofactor.

It catalyses the reaction ADP-D-glycero-beta-D-manno-heptose = ADP-L-glycero-beta-D-manno-heptose. Its pathway is nucleotide-sugar biosynthesis; ADP-L-glycero-beta-D-manno-heptose biosynthesis; ADP-L-glycero-beta-D-manno-heptose from D-glycero-beta-D-manno-heptose 7-phosphate: step 4/4. The protein operates within bacterial outer membrane biogenesis; LPS core biosynthesis. Catalyzes the interconversion between ADP-D-glycero-beta-D-manno-heptose and ADP-L-glycero-beta-D-manno-heptose via an epimerization at carbon 6 of the heptose. The polypeptide is ADP-L-glycero-D-manno-heptose-6-epimerase (Vibrio parahaemolyticus serotype O3:K6 (strain RIMD 2210633)).